Reading from the N-terminus, the 604-residue chain is ERAD-associated E3 ubiquitin-protein ligase component HRD3B (604 aa).

Residues 1 to 25 (MRVSGQSIIAISLFTLSLYIHRVQA) form the signal peptide. The tract at residues 48-69 (ESSDFDEFGESEPKSEEELDPG) is disordered. N78 and N105 each carry an N-linked (GlcNAc...) asparagine glycan. Sel1-like repeat units follow at residues 125–160 (PHAQ…AGGN), 244–274 (VAMH…FSKA), 279–307 (LGYL…AANN), 311–344 (SGHY…ANAG), 346–380 (PKAF…AERG), 464–492 (AALL…YMYA), and 498–528 (AQAM…YDQA). N293 is a glycosylation site (N-linked (GlcNAc...) asparagine).

This sequence belongs to the sel-1 family.

In terms of biological role, may be involved in the endoplasmic reticulum (ER) quality control system called ER-associated degradation (ERAD). In Arabidopsis thaliana (Mouse-ear cress), this protein is ERAD-associated E3 ubiquitin-protein ligase component HRD3B.